The chain runs to 535 residues: MKKSIVYEIMETKSSMYLSQFRLWLCFIITTLVSLSSSTRWYDDHISLKEIHAEETFHFPKNFLFGTASSAYQYEGAYLTDGKTLSNWDVFTNISGKIADGSHGKVAVDHYHRYPGDLDLMEDLGVNSYRLSLSWARILPKGRFGDVNMGGIDHYNRMINDILKTGIEPFVTLTHYDIPQELEYRYGSWLNPQIREDFEHYANICFRHFGDRVKFWSTFNEPNVQVILGYRTGTYPPSRCSKPFGNCSCGDSYIEPLVAAHNIILSHLAAVNLYRTKFQEQQRGQIGIVMNTIWFEPISDSLADRLAADRAQAFYLTWFLDPVVFGRYPREMREILGDDLPEFTKDDLKSSKNALDFIGINQYTSRYAKDCLHSVCEPGKGGSRAEGFVYANALKDGLRLGEPVGMEEMLMYATERYKNITLYVTENGFGENNTGVLLNDYQRVKFMSNYLDALKRAMRKGADVRGYFAWSLLDNFEWISGYTIRFGMYHVDFSTQERTPRLSASWYKNFIFQHRALSKDDWCLKQKEDTNFFLI.

The first 38 residues, 1–38 (MKKSIVYEIMETKSSMYLSQFRLWLCFIITTLVSLSSS), serve as a signal peptide directing secretion. A beta-D-glucoside is bound at residue Gln73. N-linked (GlcNAc...) asparagine glycosylation is present at Asn93. A beta-D-glucoside-binding positions include His175 and 220-221 (NE). Glu221 acts as the Proton donor in catalysis. Cys240 and Cys247 are oxidised to a cystine. The N-linked (GlcNAc...) asparagine glycan is linked to Asn246. Tyr363 is an a beta-D-glucoside binding site. Cys371 and Cys376 are oxidised to a cystine. An N-linked (GlcNAc...) asparagine glycan is attached at Asn419. Glu426 lines the a beta-D-glucoside pocket. The Nucleophile role is filled by Glu426. Asn432 carries an N-linked (GlcNAc...) asparagine glycan. A beta-D-glucoside-binding positions include Trp470, 477–478 (EW), and Phe486.

The protein belongs to the glycosyl hydrolase 1 family.

The enzyme catalyses Hydrolysis of terminal, non-reducing beta-D-glucosyl residues with release of beta-D-glucose.. The polypeptide is Beta-glucosidase 47 (Arabidopsis thaliana (Mouse-ear cress)).